Consider the following 185-residue polypeptide: Elongation factor P (185 aa).

The protein belongs to the elongation factor P family.

It is found in the cytoplasm. It participates in protein biosynthesis; polypeptide chain elongation. Functionally, involved in peptide bond synthesis. Stimulates efficient translation and peptide-bond synthesis on native or reconstituted 70S ribosomes in vitro. Probably functions indirectly by altering the affinity of the ribosome for aminoacyl-tRNA, thus increasing their reactivity as acceptors for peptidyl transferase. In Syntrophomonas wolfei subsp. wolfei (strain DSM 2245B / Goettingen), this protein is Elongation factor P.